The primary structure comprises 510 residues: Probable DNA ligase (510 aa).

E210 contributes to the ATP binding site. The active-site N6-AMP-lysine intermediate is the K212. Positions 217, 232, 261, 296, 367, and 373 each coordinate ATP.

It belongs to the ATP-dependent DNA ligase family. The cofactor is Mg(2+).

The catalysed reaction is ATP + (deoxyribonucleotide)n-3'-hydroxyl + 5'-phospho-(deoxyribonucleotide)m = (deoxyribonucleotide)n+m + AMP + diphosphate.. Its function is as follows. DNA ligase that seals nicks in double-stranded DNA during DNA replication, DNA recombination and DNA repair. In Saccharopolyspora erythraea (strain ATCC 11635 / DSM 40517 / JCM 4748 / NBRC 13426 / NCIMB 8594 / NRRL 2338), this protein is Probable DNA ligase.